Consider the following 333-residue polypeptide: Flagellar P-ring protein (333 aa).

The signal sequence occupies residues 1-22 (MRRNILSMFLFITLIIYSSIFA).

Belongs to the FlgI family. The basal body constitutes a major portion of the flagellar organelle and consists of four rings (L,P,S, and M) mounted on a central rod.

It localises to the periplasm. Its subcellular location is the bacterial flagellum basal body. Assembles around the rod to form the L-ring and probably protects the motor/basal body from shearing forces during rotation. The protein is Flagellar P-ring protein of Fervidobacterium nodosum (strain ATCC 35602 / DSM 5306 / Rt17-B1).